The following is a 1106-amino-acid chain: Probable LRR receptor-like serine/threonine-protein kinase At1g74360 (1106 aa).

The first 34 residues, 1-34, serve as a signal peptide directing secretion; sequence MTMVTRVIMTDDDSQSLCFLCFLLFFFITAIAVA. At 35-736 the chain is on the extracellular side; sequence GDSLDSDREV…PRTLLLIWIS (702 aa). LRR repeat units lie at residues 86 to 109, 110 to 134, 136 to 156, 157 to 182, 184 to 204, 205 to 226, and 227 to 250; these read RSRV…NFSA, LTEL…LSRC, NLKH…LPGL, SNLE…LFCN, LVVA…IFNG, CRNL…WTGF, and GRLV…MFRG. 2 N-linked (GlcNAc...) asparagine glycosylation sites follow: asparagine 93 and asparagine 106. A glycan (N-linked (GlcNAc...) asparagine) is linked at asparagine 141. N-linked (GlcNAc...) asparagine glycans are attached at residues asparagine 188 and asparagine 193. N-linked (GlcNAc...) asparagine glycosylation is found at asparagine 242 and asparagine 251. LRR repeat units follow at residues 252–275, 276–299, 300–323, 325–346, 348–371, 372–396, 398–419, 420–443, 445–468, 470–492, 566–593, 594–617, 619–640, 641–664, and 666–690; these read CTLQ…VSNC, QNLN…IGSI, SSLK…LLNL, NLVF…IFGR, TQVK…NILK, LPNL…ISQI, SLKF…EYGN, MPGL…SFGK, TSLL…IGNC, SLLW…LTRM, VRTL…ISQM, DRLS…IGQL, LAFL…IGNL, KCLQ…LNDL, and ELSK…QVAT. N-linked (GlcNAc...) asparagine glycosylation is found at asparagine 309 and asparagine 322. 4 N-linked (GlcNAc...) asparagine glycosylation sites follow: asparagine 365, asparagine 374, asparagine 384, and asparagine 408. N-linked (GlcNAc...) asparagine glycosylation is found at asparagine 454 and asparagine 467. N-linked (GlcNAc...) asparagine glycosylation is found at asparagine 623, asparagine 628, asparagine 652, asparagine 671, asparagine 709, and asparagine 713. Residues 737-757 traverse the membrane as a helical segment; that stretch reads LALALAFIACLVVSGIVLMVV. Residues 758–1106 are Cytoplasmic-facing; sequence KASREAEIDL…GLSSQGYIEM (349 aa). Residues threonine 803 and threonine 811 each carry the phosphothreonine modification. One can recognise a Protein kinase domain in the interval 814 to 1095; that stretch reads FSEERVVGRG…VKISGKAELF (282 aa). ATP-binding positions include 820–828 and lysine 842; that span reads VGRGGYGTV. The active-site Proton acceptor is the aspartate 941. Tyrosine 983 bears the Phosphotyrosine mark. At threonine 991 the chain carries Phosphothreonine.

Belongs to the protein kinase superfamily. Ser/Thr protein kinase family.

The protein resides in the mitochondrion membrane. It carries out the reaction L-seryl-[protein] + ATP = O-phospho-L-seryl-[protein] + ADP + H(+). It catalyses the reaction L-threonyl-[protein] + ATP = O-phospho-L-threonyl-[protein] + ADP + H(+). This chain is Probable LRR receptor-like serine/threonine-protein kinase At1g74360, found in Arabidopsis thaliana (Mouse-ear cress).